Consider the following 62-residue polypeptide: Large ribosomal subunit protein bL28 (62 aa).

The protein belongs to the bacterial ribosomal protein bL28 family.

This chain is Large ribosomal subunit protein bL28, found in Phytoplasma mali (strain AT).